The chain runs to 386 residues: MHLLVRALVEEMAGRGVPHRVLTMSPPKVPKDIRIGQRIKVHARRLPVLPIPSDLEGYFGLVGAWAKGSLLWVLRNRKRLRREIGARVHAHCDGSGAAAFYPYLMSRILGVPLVVQIHSSRYLSQHPTTLFERVTDPIAKWAERHAVRKAAAVLMLTDRARDEMRRKAQLPAERVHRLAYLASDQFKDADTEARRAELRERYGLDDRPIVLYVGRIAAEKGVEYYIEAAAELTRRGRDCQFVIAGDGPARPDLEKLIGARGLRDRVTITGFMSHEFIPSMISLGELVVLPSRYEELGIVILECMTMRRPLVAHDVNGVNKLIEDGTTGIVVPPFRTPEMADAVERLLDDPELRERMAENAAPLPAAKYSLSAAGDQLAGIYREIGL.

Belongs to the glycosyltransferase group 1 family.

It carries out the reaction 2'-deamino-2'-hydroxyneamine + UDP-alpha-D-kanosamine = kanamycin A + UDP + H(+). The enzyme catalyses neamine + UDP-alpha-D-kanosamine = kanamycin B + UDP + H(+). It catalyses the reaction paromamine + UDP-alpha-D-kanosamine = kanamycin C + UDP + H(+). The catalysed reaction is 2'-deamino-2'-hydroxyparomamine + UDP-alpha-D-kanosamine = kanamycin X + UDP + H(+). The protein operates within antibiotic biosynthesis; kanamycin biosynthesis. In terms of biological role, glycosyltransferase involved in the biosynthesis of kanamycins by catalyzing the transfer of the hexose kanosamine from UDP-alpha-D-kanosamine to disaccharide precursors. Can also use UDP-alpha-D-glucose as sugar donor with much lower efficiency. In Streptomyces kanamyceticus, this protein is Alpha-D-kanosaminyltransferase (kanE).